Here is a 1082-residue protein sequence, read N- to C-terminus: Putative white-brown complex homolog protein 30 (1082 aa).

2 helical membrane-spanning segments follow: residues 12 to 32 (HIFLFFVFGLSFMSFALSLDG) and 292 to 312 (NIHAYGAILIASLSLLMIMVY). Residues 329–348 (SREAAARHAKETTQARERWK) are compositionally biased toward basic and acidic residues. Positions 329 to 437 (SREAAARHAK…QAPKGKQLHT (109 aa)) are disordered. Positions 484 to 726 (VAFKDLTLTL…FADIGITVPD (243 aa)) constitute an ABC transporter domain. 518–525 (GPSGAGKT) serves as a coordination point for ATP. Positions 832 to 1029 (RQYRYFVGRV…TLEAFVLSNA (198 aa)) constitute an ABC transmembrane type-2 domain. Transmembrane regions (helical) follow at residues 853-873 (ALDFLILLVAGACLGTLAKVN), 877-897 (IDTLGYTYTIIAVSLLCKISA), 958-978 (YIVLVCLVYCVTGMAYIFAIL), 979-999 (YSPSAAQLLSVLVPVVMTLIA), and 1054-1074 (WILCLIVLVLMGLICRFIAYF).

This sequence belongs to the ABC transporter superfamily. ABCG family. Eye pigment precursor importer (TC 3.A.1.204) subfamily.

The protein localises to the membrane. This is Putative white-brown complex homolog protein 30 (WBC30) from Arabidopsis thaliana (Mouse-ear cress).